A 740-amino-acid chain; its full sequence is Pheromone-regulated membrane protein 10 (740 aa).

3 disordered regions span residues 1–48 (MGKN…RSGL), 65–97 (FADEDEVVEQDEAAQKTEAVASESSSLADKEEC), and 241–269 (NQPGGQAPQRPGLRKSAQTLSSETLPTGE). Positions 7–18 (QAAEGEEARRGS) are enriched in basic and acidic residues. Positions 19–33 (ESSGSSAEPSGAVAE) are enriched in low complexity. The segment covering 67-76 (DEDEVVEQDE) has biased composition (acidic residues). Over residues 256–267 (SAQTLSSETLPT) the composition is skewed to polar residues. A run of 10 helical transmembrane segments spans residues 422–442 (AWMCVLLYGFCASMVTPFAFG), 445–465 (WINLVVSFGIGCCVGLLQFIV), 475–495 (VFEITASIVVSFCARALGSIP), 499–519 (ICFGSTVQGSLALILPGYIIL), 541–561 (IIYSLFLGFGITLGAALFGWI), 574–594 (ELSPWFRFIFVPGFALGLSLI), 599–619 (WSQIPVMVCIACSGYVVTYWS), 622–642 (HFTASTEFTASIGAFVIGIMG), 651–671 (GLAMTAMLPGIFVQVPSGIAS), and 707–727 (ITMIQVCIGISVGLFASTLVV).

The protein belongs to the ThrE exporter (TC 2.A.79) family.

It is found in the membrane. This Eremothecium gossypii (strain ATCC 10895 / CBS 109.51 / FGSC 9923 / NRRL Y-1056) (Yeast) protein is Pheromone-regulated membrane protein 10.